The primary structure comprises 570 residues: D-xylulose kinase A (570 aa).

Residues H95, R166, D282, and N283 each contribute to the substrate site. ATP is bound by residues W364, 469–470 (GG), and N473.

The protein belongs to the FGGY kinase family.

The protein resides in the cytoplasm. The catalysed reaction is D-xylulose + ATP = D-xylulose 5-phosphate + ADP + H(+). Its function is as follows. Highly specific D-xylulose kinase which participates in the catabolism of xylose. Xylose is a major component of hemicelluloses such as xylan. Most fungi utilize D-xylose via three enzymatic reactions, xylose reductase (XR), xylitol dehydrogenase (XDH), and xylulokinase, to form xylulose 5-phosphate, which enters pentose phosphate pathway. The polypeptide is D-xylulose kinase A (xkiA) (Aspergillus niger).